Reading from the N-terminus, the 115-residue chain is Large ribosomal subunit protein bL19 (115 aa).

Belongs to the bacterial ribosomal protein bL19 family.

In terms of biological role, this protein is located at the 30S-50S ribosomal subunit interface and may play a role in the structure and function of the aminoacyl-tRNA binding site. This Streptococcus pyogenes serotype M2 (strain MGAS10270) protein is Large ribosomal subunit protein bL19.